Here is a 472-residue protein sequence, read N- to C-terminus: Glutamate--tRNA ligase (472 aa).

Residues 18–28 (PSPTGYLHIGG) carry the 'HIGH' region motif. Over residues 122–138 (RARGEKPRYDGRWRPEP) the composition is skewed to basic and acidic residues. The tract at residues 122–150 (RARGEKPRYDGRWRPEPGKTLPVPPSGVQ) is disordered. Positions 250-254 (KLSKR) match the 'KMSKS' region motif. Lysine 253 contributes to the ATP binding site.

The protein belongs to the class-I aminoacyl-tRNA synthetase family. Glutamate--tRNA ligase type 1 subfamily. Monomer.

It localises to the cytoplasm. The enzyme catalyses tRNA(Glu) + L-glutamate + ATP = L-glutamyl-tRNA(Glu) + AMP + diphosphate. In terms of biological role, catalyzes the attachment of glutamate to tRNA(Glu) in a two-step reaction: glutamate is first activated by ATP to form Glu-AMP and then transferred to the acceptor end of tRNA(Glu). This chain is Glutamate--tRNA ligase, found in Thiobacillus denitrificans (strain ATCC 25259 / T1).